The chain runs to 627 residues: Membrane protein insertase YidC (627 aa).

The helical transmembrane segment at 8 to 28 threads the bilayer; the sequence is LFLALILSMGIWMGVNYFFFP. Positions 33–57 are enriched in polar residues; that stretch reads KKNTETKQTQSDKTSENTKQQITSG. A disordered region spans residues 33–68; that stretch reads KKNTETKQTQSDKTSENTKQQITSGKTKESNSADPV. Residues 58–68 show a composition bias toward basic and acidic residues; it reads KTKESNSADPV. 4 consecutive transmembrane segments (helical) span residues 417 to 437, 488 to 508, 536 to 556, and 575 to 595; these read FTIPNYGWSIIIFAILFKLVF, VGGCLPMVIQIPIFIALYTAF, AIPYFTQTGIGLNLLALLMVG, and MLMYVMPVMMLYIFWNMPSGV.

Belongs to the OXA1/ALB3/YidC family. Type 1 subfamily. As to quaternary structure, interacts with the Sec translocase complex via SecD. Specifically interacts with transmembrane segments of nascent integral membrane proteins during membrane integration.

The protein localises to the cell inner membrane. In terms of biological role, required for the insertion and/or proper folding and/or complex formation of integral membrane proteins into the membrane. Involved in integration of membrane proteins that insert both dependently and independently of the Sec translocase complex, as well as at least some lipoproteins. Aids folding of multispanning membrane proteins. The polypeptide is Membrane protein insertase YidC (Leptospira interrogans serogroup Icterohaemorrhagiae serovar copenhageni (strain Fiocruz L1-130)).